The following is a 149-amino-acid chain: Lymphocyte antigen 6 complex locus protein G5c (149 aa).

Residues 1–41 (MLFMAGPAASWSLRPLGLHGVPQALCAVLLTVLVMKTLVLG) form the signal peptide. The region spanning 59–149 (LNCYRCLLET…NPDNRKNSMH (91 aa)) is the UPAR/Ly6 domain. Disulfide bonds link Cys-61–Cys-88, Cys-64–Cys-73, Cys-80–Cys-106, Cys-115–Cys-132, and Cys-133–Cys-138. Asn-95 carries an N-linked (GlcNAc...) asparagine glycan.

As to quaternary structure, forms oligomers. In terms of processing, N-glycosylated. In terms of tissue distribution, detected in adult brain.

It is found in the secreted. Its function is as follows. May have a role in hematopoietic cell differentiation. The polypeptide is Lymphocyte antigen 6 complex locus protein G5c (Ly6g5c) (Mus musculus (Mouse)).